The following is an 871-amino-acid chain: Chaperone protein ClpB 1 (871 aa).

A Clp R domain is found at 6-147 (PNQFTEKAWA…REAIQQIRGS (142 aa)). 2 repeat regions span residues 9–73 (FTEK…ISRQ) and 84–147 (LGQS…IRGS). The segment at 160-341 (AALEKYGRDL…RRFQQVYVDQ (182 aa)) is NBD1. 207-214 (GEPGVGKT) is a binding site for ATP. The tract at residues 342 to 550 (PSVEDTISIL…IAEIISKWTG (209 aa)) is linker. The stretch at 392–526 (IDLVDEAAAK…AEAKLREIQV (135 aa)) forms a coiled coil. Residues 560-771 (EAQKLLHLEE…RVDEFIIFHS (212 aa)) are NBD2. Residue 610–617 (GPTGVGKT) coordinates ATP. A C-terminal region spans residues 772 to 871 (LRKDQLRQIV…FRRQVELATV (100 aa)).

It belongs to the ClpA/ClpB family. As to quaternary structure, homohexamer. The oligomerization is ATP-dependent.

The protein localises to the cytoplasm. In terms of biological role, part of a stress-induced multi-chaperone system, it is involved in the recovery of the cell from heat-induced damage, in cooperation with DnaK, DnaJ and GrpE. Acts before DnaK, in the processing of protein aggregates. Protein binding stimulates the ATPase activity; ATP hydrolysis unfolds the denatured protein aggregates, which probably helps expose new hydrophobic binding sites on the surface of ClpB-bound aggregates, contributing to the solubilization and refolding of denatured protein aggregates by DnaK. In Thermosynechococcus vestitus (strain NIES-2133 / IAM M-273 / BP-1), this protein is Chaperone protein ClpB 1 (clpB1).